A 491-amino-acid polypeptide reads, in one-letter code: Glutamyl-tRNA(Gln) amidotransferase subunit A (491 aa).

Catalysis depends on charge relay system residues lysine 81 and serine 156. Residue serine 180 is the Acyl-ester intermediate of the active site.

The protein belongs to the amidase family. GatA subfamily. Heterotrimer of A, B and C subunits.

It catalyses the reaction L-glutamyl-tRNA(Gln) + L-glutamine + ATP + H2O = L-glutaminyl-tRNA(Gln) + L-glutamate + ADP + phosphate + H(+). Functionally, allows the formation of correctly charged Gln-tRNA(Gln) through the transamidation of misacylated Glu-tRNA(Gln) in organisms which lack glutaminyl-tRNA synthetase. The reaction takes place in the presence of glutamine and ATP through an activated gamma-phospho-Glu-tRNA(Gln). The chain is Glutamyl-tRNA(Gln) amidotransferase subunit A from Alcanivorax borkumensis (strain ATCC 700651 / DSM 11573 / NCIMB 13689 / SK2).